Consider the following 115-residue polypeptide: Large ribosomal subunit protein bL20c (115 aa).

This sequence belongs to the bacterial ribosomal protein bL20 family.

The protein localises to the plastid. It localises to the chloroplast. In terms of biological role, binds directly to 23S ribosomal RNA and is necessary for the in vitro assembly process of the 50S ribosomal subunit. It is not involved in the protein synthesizing functions of that subunit. This Emiliania huxleyi (Coccolithophore) protein is Large ribosomal subunit protein bL20c.